A 143-amino-acid polypeptide reads, in one-letter code: Deoxyuridine 5'-triphosphate nucleotidohydrolase (143 aa).

Substrate-binding positions include 62–64, N75, 79–81, and K89; these read RSG and TID.

This sequence belongs to the dUTPase family. It depends on Mg(2+) as a cofactor.

It carries out the reaction dUTP + H2O = dUMP + diphosphate + H(+). It functions in the pathway pyrimidine metabolism; dUMP biosynthesis; dUMP from dCTP (dUTP route): step 2/2. In terms of biological role, this enzyme is involved in nucleotide metabolism: it produces dUMP, the immediate precursor of thymidine nucleotides and it decreases the intracellular concentration of dUTP so that uracil cannot be incorporated into DNA. This Clostridium kluyveri (strain ATCC 8527 / DSM 555 / NBRC 12016 / NCIMB 10680 / K1) protein is Deoxyuridine 5'-triphosphate nucleotidohydrolase.